We begin with the raw amino-acid sequence, 578 residues long: Moesin/ezrin/radixin homolog 1 (578 aa).

The FERM domain occupies 1-296 (MSPKALNVRV…GNHELYMRRR (296 aa)). Residues 463-555 (ASTTPQHHHV…HRENVRQGRD (93 aa)) form a disordered region. Positions 475-484 (DENENEEELT) are enriched in acidic residues. Over residues 492–555 (VSRDLDTDEH…HRENVRQGRD (64 aa)) the composition is skewed to basic and acidic residues. Residue Thr-559 is modified to Phosphothreonine.

In terms of assembly, interacts with wgn. Interacts with Mer and arm at the adherens junction. Interacts with cytoskeletal actin at apical buds of microvilli in the precellularised embryo. Interacts with PCID2 (possibly via FERM domain). Post-translationally, phosphorylated on Thr-559. In the oocyte this phosphorylation is induced by phosphatidylinositol 4,5-bisphosphate (PtdIns[4,5]P(2)) generated by sktl.

It localises to the cell junction. It is found in the adherens junction. The protein resides in the cell projection. Its subcellular location is the microvillus. The protein localises to the rhabdomere. It localises to the cell membrane. It is found in the cytoplasm. The protein resides in the cytoskeleton. Its subcellular location is the cell cortex. The protein localises to the cilium. It localises to the flagellum. It is found in the nucleus. The protein resides in the nucleoplasm. Its subcellular location is the chromosome. Involved in connections of major cytoskeletal structures to the plasma membrane. Together with wgn, involved in control of axon targeting of R8 and R2-R5 photoreceptors, independent of egr. In the nucleus, recruited to sites of active transcription by RNA polymerase II where it has a role in nuclear mRNA export together with the mRNA export factor PCID2 and other messenger ribonucleoprotein (mRNP) particles. The sequence is that of Moesin/ezrin/radixin homolog 1 (Moe) from Drosophila melanogaster (Fruit fly).